Reading from the N-terminus, the 29-residue chain is Galanin (29 aa).

At Ala29 the chain carries Alanine amide.

The protein belongs to the galanin family.

The protein localises to the secreted. Its function is as follows. Contracts smooth muscle of the gastrointestinal and genitourinary tract, regulates growth hormone release, modulates insulin release, and may be involved in the control of adrenal secretion. This Ovis aries (Sheep) protein is Galanin (GAL).